The chain runs to 253 residues: Prolactin-7A2 (253 aa).

A signal peptide spans 1–30 (MSFSFSQPCPSGALLLVVVSSLLLWENVAS). N36, N103, and N135 each carry an N-linked (GlcNAc...) asparagine glycan. Disulfide bonds link C101–C218 and C235–C244.

The protein belongs to the somatotropin/prolactin family. Expression restricted to the placental tissue. Expressed only in the spongiotrophoblasts.

It localises to the secreted. The sequence is that of Prolactin-7A2 (Prl7a2) from Mus musculus (Mouse).